Consider the following 1712-residue polypeptide: Collagen alpha-2(IV) chain (1712 aa).

An N-terminal signal peptide occupies residues 1 to 25 (MGRDQRAVAGPALRRWLLLGTVTVG). Residues 26–183 (FLAQSVLAGV…LPKEERDRYR (158 aa)) constitute a propeptide, N-terminal propeptide (7S domain). 5 disordered regions span residues 60–237 (RGQP…GFYG), 302–448 (GLRG…PDGF), 507–640 (INGE…DAGL), 690–906 (GLPG…SPGF), and 1157–1480 (TGPP…GLPG). Low complexity predominate over residues 68–84 (PQGYNGPPGLQGFPGLQ). Gly residues predominate over residues 121–130 (GHPGQGGPRG). Residue Asn138 is glycosylated (N-linked (GlcNAc...) asparagine). Positions 140–153 (TQGDSGPQGPPGSE) are enriched in low complexity. The span at 175-186 (PKEERDRYRGEP) shows a compositional bias: basic and acidic residues. The tract at residues 184–1484 (GEPGEPGLVG…SPGLPGMPGR (1301 aa)) is triple-helical region. 2 stretches are compositionally biased toward pro residues: residues 215–224 (RPGPPGPPGP) and 433–445 (PPGP…PPGP). Basic and acidic residues-rich tracts occupy residues 511–520 (PGRKGDRGDP) and 571–582 (KGDDGSPGRDGL). 2 stretches are compositionally biased toward low complexity: residues 628–640 (LKGQ…DAGL) and 698–710 (TGAK…PGFA). Over residues 711–720 (GADGGPGPRG) the composition is skewed to gly residues. Low complexity predominate over residues 721–730 (LPGDAGREGF). Over residues 752 to 766 (DGSPGPIGLPGPDGP) the composition is skewed to pro residues. 5 stretches are compositionally biased toward low complexity: residues 769–778 (ERGLPGEVLG), 813–823 (MPGMPGLKGQP), 831–844 (QPGL…HGFP), 1302–1328 (GSAA…KGWA), and 1400–1421 (QPGT…EMGP). One can recognise a Collagen IV NC1 domain in the interval 1489-1712 (GYLLVKHSQT…SRCQVCMKNL (224 aa)). 3'-bromotyrosine is present on Tyr1490. Intrachain disulfides connect Cys1504-Cys1593, Cys1537-Cys1590, Cys1549-Cys1555, Cys1612-Cys1708, Cys1646-Cys1705, and Cys1658-Cys1665.

The protein belongs to the type IV collagen family. As to quaternary structure, there are six type IV collagen isoforms, alpha 1(IV)-alpha 6(IV), each of which can form a triple helix structure with 2 other chains to generate type IV collagen network. Interacts with EFEMP2. Prolines at the third position of the tripeptide repeating unit (G-X-Y) are hydroxylated in some or all of the chains. In terms of processing, type IV collagens contain numerous cysteine residues which are involved in inter- and intramolecular disulfide bonding. 12 of these, located in the NC1 domain, are conserved in all known type IV collagens. Post-translationally, the trimeric structure of the NC1 domains is stabilized by covalent bonds between Lys and Met residues. Proteolytic processing produces the C-terminal NC1 peptide, canstatin.

Its subcellular location is the secreted. It is found in the extracellular space. The protein localises to the extracellular matrix. It localises to the basement membrane. Its function is as follows. Type IV collagen is the major structural component of glomerular basement membranes (GBM), forming a 'chicken-wire' meshwork together with laminins, proteoglycans and entactin/nidogen. Canstatin, a cleavage product corresponding to the collagen alpha 2(IV) NC1 domain, possesses both anti-angiogenic and anti-tumor cell activity. It inhibits proliferation and migration of endothelial cells, reduces mitochondrial membrane potential, and induces apoptosis. Specifically induces Fas-dependent apoptosis and activates procaspase-8 and -9 activity. Ligand for alphavbeta3 and alphavbeta5 integrins. In Homo sapiens (Human), this protein is Collagen alpha-2(IV) chain.